The chain runs to 384 residues: Dual-specificity RNA methyltransferase RlmN (384 aa).

Glutamate 93 acts as the Proton acceptor in catalysis. The region spanning 99–339 is the Radical SAM core domain; sequence EDTRGTLCVS…TTIRKTRGDD (241 aa). A disulfide bond links cysteine 106 and cysteine 344. [4Fe-4S] cluster-binding residues include cysteine 113, cysteine 117, and cysteine 120. Residues 170–171, serine 202, 224–226, and asparagine 301 each bind S-adenosyl-L-methionine; these read GE and SLH. The active-site S-methylcysteine intermediate is cysteine 344.

Belongs to the radical SAM superfamily. RlmN family. Requires [4Fe-4S] cluster as cofactor.

The protein localises to the cytoplasm. It catalyses the reaction adenosine(2503) in 23S rRNA + 2 reduced [2Fe-2S]-[ferredoxin] + 2 S-adenosyl-L-methionine = 2-methyladenosine(2503) in 23S rRNA + 5'-deoxyadenosine + L-methionine + 2 oxidized [2Fe-2S]-[ferredoxin] + S-adenosyl-L-homocysteine. The enzyme catalyses adenosine(37) in tRNA + 2 reduced [2Fe-2S]-[ferredoxin] + 2 S-adenosyl-L-methionine = 2-methyladenosine(37) in tRNA + 5'-deoxyadenosine + L-methionine + 2 oxidized [2Fe-2S]-[ferredoxin] + S-adenosyl-L-homocysteine. Its function is as follows. Specifically methylates position 2 of adenine 2503 in 23S rRNA and position 2 of adenine 37 in tRNAs. m2A2503 modification seems to play a crucial role in the proofreading step occurring at the peptidyl transferase center and thus would serve to optimize ribosomal fidelity. The polypeptide is Dual-specificity RNA methyltransferase RlmN (Cupriavidus metallidurans (strain ATCC 43123 / DSM 2839 / NBRC 102507 / CH34) (Ralstonia metallidurans)).